The following is a 278-amino-acid chain: Undecaprenyl-diphosphatase 2 (278 aa).

The next 7 membrane-spanning stretches (helical) occupy residues 43–63 (GAAFTAITQIGTEMAVLVYFW), 88–108 (ARLGWLIIVGSVPIVFLGLFF), 119–139 (LYITAVMLIVFGIVLGLADRI), 149–169 (LIWRDGILFGFAQAMALIPGV), 194–214 (FLLAVPAVFGSGFYQLFKSIG), 226–246 (LATLIAFIVGYAVIVVFLKLV), and 254–274 (FVWYRVVIGFILLALLGTGVI).

It belongs to the UppP family.

The protein resides in the cell inner membrane. It carries out the reaction di-trans,octa-cis-undecaprenyl diphosphate + H2O = di-trans,octa-cis-undecaprenyl phosphate + phosphate + H(+). Catalyzes the dephosphorylation of undecaprenyl diphosphate (UPP). Confers resistance to bacitracin. The protein is Undecaprenyl-diphosphatase 2 of Agrobacterium fabrum (strain C58 / ATCC 33970) (Agrobacterium tumefaciens (strain C58)).